Consider the following 188-residue polypeptide: dCTP deaminase (188 aa).

DCTP contacts are provided by residues K111–R116, T135–E137, Q156, Y170, and Q180. E137 acts as the Proton donor/acceptor in catalysis.

The protein belongs to the dCTP deaminase family. As to quaternary structure, homotrimer.

It catalyses the reaction dCTP + H2O + H(+) = dUTP + NH4(+). It participates in pyrimidine metabolism; dUMP biosynthesis; dUMP from dCTP (dUTP route): step 1/2. Its function is as follows. Catalyzes the deamination of dCTP to dUTP. In Neisseria gonorrhoeae (strain ATCC 700825 / FA 1090), this protein is dCTP deaminase.